The sequence spans 1029 residues: DNA repair protein RAD5A (1029 aa).

The segment at 83–104 is disordered; the sequence is SVGANHRVEEENESVNGGGEES. The Helicase ATP-binding domain maps to 406-622; the sequence is PSTLQMARGG…YSLLRFLRIE (217 aa). 419-426 contacts ATP; it reads DAMGLGKT. The DEAH box signature appears at 573–576; the sequence is DEAH. Residues 794–834 form an RING-type zinc finger; it reads CPICLEALEDAVLTPCAHRLCRECLLASWRNSTSGLCPVCR. Residues 864–1029 form the Helicase C-terminal domain; it reads KITALLEELE…RIEELKMLFT (166 aa).

The protein belongs to the SNF2/RAD54 helicase family. RAD16 subfamily.

It is found in the nucleus. Functions in error-free postreplication DNA repair or DNA-damage tolerance (DTT) pathway. Required for homologous recombination (HR) induced by DNA double-strand break (DSB) in somatic cells. Required for damage-induced DNA repair, independently of MUS81 and RECQL4A. Plays a role in synthesis-dependent strand annealing (SDSA) but not in single-strand annealing (SSA). Possesses double-stranded DNA-dependent ATPase activity. Is able to regress replication forks with preference for forks with a leading strand gap. Is able to catalyze branch migration of Holliday junctions and is unaffected by protein blockades. In Arabidopsis thaliana (Mouse-ear cress), this protein is DNA repair protein RAD5A.